A 440-amino-acid chain; its full sequence is Probable circularly permuted 1,3-beta-glucanase (440 aa).

Residues 1 to 20 (MHYSLFFGAALAASVSTVSA) form the signal peptide. Positions 100 to 112 (GEKPKRELKPSIH) are enriched in basic and acidic residues. Disordered stretches follow at residues 100–126 (GEKP…FHEK) and 153–195 (PAAP…VAPG). A compositionally biased stretch (basic residues) spans 113–125 (ERRHGHSHQRFHE). The span at 153–164 (PAAPTSAPGAPG) shows a compositional bias: low complexity. Residues 177–186 (GGDKPKDPKP) show a composition bias toward basic and acidic residues. Positions 350-355 (EFDVLE) match the ExDxxE motif motif.

This sequence belongs to the PGA52 family.

It localises to the secreted. It carries out the reaction Hydrolysis of (1-&gt;3)-beta-D-glucosidic linkages in (1-&gt;3)-beta-D-glucans.. In terms of biological role, probable circularly permuted 1,3-beta-glucanase involved in cell wall modification through beta-1,3-glucan network alterations such as increased branching or remodeling. The polypeptide is Probable circularly permuted 1,3-beta-glucanase (Arthroderma benhamiae (strain ATCC MYA-4681 / CBS 112371) (Trichophyton mentagrophytes)).